We begin with the raw amino-acid sequence, 57 residues long: Peptide BmKa1 (57 aa).

Residues 1–22 form the signal peptide; that stretch reads MKPRVFFLLFLLVAAMIETGES. Acidic residues-rich tracts occupy residues 20 to 29 and 45 to 57; these read GESEENEEGS and VDNE…GDSD. The interval 20-57 is disordered; the sequence is GESEENEEGSNESGKSTEAKNTDASVDNEDSDIDGDSD.

It belongs to the non-disulfide-bridged peptide (NDBP) superfamily. In terms of tissue distribution, expressed by the venom gland.

Its subcellular location is the secreted. The chain is Peptide BmKa1 from Olivierus martensii (Manchurian scorpion).